A 436-amino-acid chain; its full sequence is GTPase Der (436 aa).

2 consecutive EngA-type G domains span residues 4-167 (PVIA…PTDL) and 175-351 (IKFS…ENQN). Residues 10-17 (GRPNVGKS), 57-61 (DTGGI), 119-122 (NKAD), 181-188 (GRPNVGKS), 229-233 (DTAGI), and 294-297 (NKWD) contribute to the GTP site. The KH-like domain occupies 352–436 (RRIQSALLND…PIHLIPRQRK (85 aa)).

This sequence belongs to the TRAFAC class TrmE-Era-EngA-EngB-Septin-like GTPase superfamily. EngA (Der) GTPase family. In terms of assembly, associates with the 50S ribosomal subunit.

Its function is as follows. GTPase that plays an essential role in the late steps of ribosome biogenesis. The sequence is that of GTPase Der from Latilactobacillus sakei subsp. sakei (strain 23K) (Lactobacillus sakei subsp. sakei).